Reading from the N-terminus, the 633-residue chain is Probable alkaline/neutral invertase A, chloroplastic (633 aa).

The N-terminal 71 residues, 1–71 (MNAITFLGNS…TNAVPFCTDR (71 aa)), are a transit peptide targeting the chloroplast. Ser-623 carries the post-translational modification Phosphoserine.

It belongs to the glycosyl hydrolase 100 family. In terms of tissue distribution, expressed in flowers.

It localises to the plastid. The protein resides in the chloroplast. The enzyme catalyses Hydrolysis of terminal non-reducing beta-D-fructofuranoside residues in beta-D-fructofuranosides.. Functionally, chloroplastic invertase that cleaves sucrose into glucose and fructose and may participate in the carbon flux between the cytosol and plastids in leaves. This Arabidopsis thaliana (Mouse-ear cress) protein is Probable alkaline/neutral invertase A, chloroplastic.